The sequence spans 179 residues: Peptide deformylase (179 aa).

Fe cation is bound by residues C102 and H144. Residue E145 is part of the active site. A Fe cation-binding site is contributed by H148.

This sequence belongs to the polypeptide deformylase family. Requires Fe(2+) as cofactor.

The catalysed reaction is N-terminal N-formyl-L-methionyl-[peptide] + H2O = N-terminal L-methionyl-[peptide] + formate. Its function is as follows. Removes the formyl group from the N-terminal Met of newly synthesized proteins. Requires at least a dipeptide for an efficient rate of reaction. N-terminal L-methionine is a prerequisite for activity but the enzyme has broad specificity at other positions. The sequence is that of Peptide deformylase from Wolbachia pipientis wMel.